We begin with the raw amino-acid sequence, 33 residues long: Antimicrobial peptide MBP-1 (33 aa).

Predominantly in the embryo portion of the kernel.

The protein localises to the secreted. In terms of biological role, inhibitor of both bacterial and fungal growth in vitro. This chain is Antimicrobial peptide MBP-1, found in Zea mays (Maize).